A 404-amino-acid chain; its full sequence is Caspase-1 (404 aa).

The CARD domain maps to 1–91 (MADKVLKEKR…HLAGVLELST (91 aa)). A propeptide spanning residues 1 to 119 (MADKVLKEKR…PFPAPQTVQD (119 aa)) is cleaved from the precursor. A disordered region spans residues 111–132 (FPAPQTVQDNPVKPASSEPRGS). Active-site residues include H237 and C285. The propeptide occupies 298 to 316 (SVGPSGNSSLLAAEDFEYD). A Phosphoserine modification is found at S302.

It belongs to the peptidase C14A family. As to quaternary structure, heterotetramer that consists of two anti-parallel arranged heterodimers, each one formed by a 20 kDa (Caspase-1 subunit p20) and a 10 kDa (Caspase-1 subunit p10) subunit. May be a component of the inflammasome, a protein complex which also includes PYCARD, CARD8 and NLRP2 and whose function would be the activation of pro-inflammatory caspases. Component of the AIM2 PANoptosome complex, a multiprotein complex that drives inflammatory cell death (PANoptosis). Both the p10 and p20 subunits interact with MEFV. Interacts with CARD17P/INCA and CARD18. Interacts with SERPINB1; this interaction regulates CASP1 activity. In terms of assembly, heterotetramer that consists of two anti-parallel arranged heterodimers, each one formed by a 20 kDa (Caspase-1 subunit p20) and a 10 kDa (Caspase-1 subunit p10) subunit. The two subunits are derived from the precursor sequence by an autocatalytic mechanism. Post-translationally, ubiquitinated via 'Lys-11'-linked polyubiquitination. Deubiquitinated by USP8.

The protein resides in the cytoplasm. It is found in the cell membrane. It catalyses the reaction Strict requirement for an Asp residue at position P1 and has a preferred cleavage sequence of Tyr-Val-Ala-Asp-|-.. Thiol protease involved in a variety of inflammatory processes by proteolytically cleaving other proteins, such as the precursors of the inflammatory cytokines interleukin-1 beta (IL1B) and interleukin 18 (IL18) as well as the pyroptosis inducer Gasdermin-D (GSDMD), into active mature peptides. Plays a key role in cell immunity as an inflammatory response initiator: once activated through formation of an inflammasome complex, it initiates a pro-inflammatory response through the cleavage of the two inflammatory cytokines IL1B and IL18, releasing the mature cytokines which are involved in a variety of inflammatory processes. Cleaves a tetrapeptide after an Asp residue at position P1. Also initiates pyroptosis, a programmed lytic cell death pathway, through cleavage of GSDMD. In contrast to cleavage of interleukin IL1B, recognition and cleavage of GSDMD is not strictly dependent on the consensus cleavage site but depends on an exosite interface on CASP1 that recognizes and binds the Gasdermin-D, C-terminal (GSDMD-CT) part. Cleaves and activates CASP7 in response to bacterial infection, promoting plasma membrane repair. Upon inflammasome activation, during DNA virus infection but not RNA virus challenge, controls antiviral immunity through the cleavage of CGAS, rendering it inactive. In apoptotic cells, cleaves SPHK2 which is released from cells and remains enzymatically active extracellularly. In Sus scrofa (Pig), this protein is Caspase-1 (CASP1).